A 514-amino-acid chain; its full sequence is Beta-secretase 2 (514 aa).

The N-terminal stretch at 1 to 20 is a signal peptide; that stretch reads MGALLRALLLPLLAQWLLRA. Positions 21-62 are excised as a propeptide; that stretch reads VPVLAPAPFTLPLQVAGAANHRASTVPGLGTPELPRADGLAL. The Extracellular segment spans residues 21-469; that stretch reads VPVLAPAPFT…NEPILWIVSY (449 aa). In terms of domain architecture, Peptidase A1 spans 88-425; the sequence is YYLEMLIGTP…DRAQRRVGFA (338 aa). D106 is an active-site residue. A glycan (N-linked (GlcNAc...) asparagine) is linked at N166. Intrachain disulfides connect C229–C429, C288–C453, and C340–C389. D299 is an active-site residue. N-linked (GlcNAc...) asparagine glycosylation occurs at N362. Residues 470 to 490 traverse the membrane as a helical segment; the sequence is ALMSVCGAILLVLILLLLFPL. Residues 491–514 are Cytoplasmic-facing; that stretch reads HCRHAPRDPEVVNDESSLVRHRWK.

Belongs to the peptidase A1 family. In terms of assembly, monomer. Interacts with RTN3 and RTN4. Post-translationally, undergoes autoproteolytic cleavage. Glycosylated.

Its subcellular location is the cell membrane. The protein resides in the golgi apparatus. It localises to the endoplasmic reticulum. The protein localises to the endosome. It is found in the melanosome. It catalyses the reaction Broad endopeptidase specificity. Cleaves Glu-Val-Asn-Leu-|-Asp-Ala-Glu-Phe in the Swedish variant of Alzheimer's amyloid precursor protein.. Its function is as follows. Responsible for the proteolytic processing of the amyloid precursor protein (APP). Cleaves APP, between residues 690 and 691, leading to the generation and extracellular release of beta-cleaved soluble APP, and a corresponding cell-associated C-terminal fragment which is later released by gamma-secretase. It has also been shown that it can cleave APP between residues 671 and 672. Involved in the proteolytic shedding of PMEL at early stages of melanosome biogenesis. Cleaves PMEL within the M-beta fragment to release the amyloidogenic PMEL luminal fragment containing M-alpha and a small portion of M-beta N-terminus. This is a prerequisite step for subsequent processing and assembly of PMEL fibrils into amyloid sheets. Responsible also for the proteolytic processing of CLTRN in pancreatic beta cells. The protein is Beta-secretase 2 (Bace2) of Rattus norvegicus (Rat).